The following is a 459-amino-acid chain: Ribulose bisphosphate carboxylase large chain (459 aa).

The residue at position 4 (Lys-4) is an N6,N6,N6-trimethyllysine. The substrate site is built by Asn-113 and Thr-163. The active-site Proton acceptor is the Lys-165. Lys-167 is a substrate binding site. The Mg(2+) site is built by Lys-191, Asp-193, and Glu-194. The residue at position 191 (Lys-191) is an N6-carboxylysine. The active-site Proton acceptor is His-284. Substrate-binding residues include Arg-285, His-317, and Ser-369.

The protein belongs to the RuBisCO large chain family. Type I subfamily. As to quaternary structure, heterohexadecamer of 8 large chains and 8 small chains; disulfide-linked. The disulfide link is formed within the large subunit homodimers. It depends on Mg(2+) as a cofactor. Post-translationally, the disulfide bond which can form in the large chain dimeric partners within the hexadecamer appears to be associated with oxidative stress and protein turnover.

It localises to the plastid. It is found in the chloroplast. The catalysed reaction is 2 (2R)-3-phosphoglycerate + 2 H(+) = D-ribulose 1,5-bisphosphate + CO2 + H2O. It catalyses the reaction D-ribulose 1,5-bisphosphate + O2 = 2-phosphoglycolate + (2R)-3-phosphoglycerate + 2 H(+). Its function is as follows. RuBisCO catalyzes two reactions: the carboxylation of D-ribulose 1,5-bisphosphate, the primary event in carbon dioxide fixation, as well as the oxidative fragmentation of the pentose substrate in the photorespiration process. Both reactions occur simultaneously and in competition at the same active site. The protein is Ribulose bisphosphate carboxylase large chain of Geum quellyon (Chilean avens).